We begin with the raw amino-acid sequence, 830 residues long: uncharacterized protein (830 aa).

3 disordered regions span residues 1 to 28, 70 to 147, and 186 to 210; these read MGVQ…DSIC, RRAN…GNFA, and AASP…SKSL. Residues 10 to 27 are compositionally biased toward polar residues; it reads NSKNWLRQPDQQPIQDSI. 2 stretches are compositionally biased toward low complexity: residues 100–130 and 186–199; these read QKSS…SIQS and AASP…ASTS. Over residues 200–210 the composition is skewed to polar residues; it reads ENLTPTSSKSL. 10 consecutive transmembrane segments (helical) span residues 505-525, 529-549, 551-571, 584-604, 622-642, 659-679, 691-711, 715-735, 740-760, and 802-822; these read WLVA…VYGG, DMLI…YINP, FFLF…FLGR, FCFA…YVVF, MLYA…GSAL, IIAV…LSLL, IQMF…LHFG, ISSA…SHFI, FAVV…AQGG, and IAIG…PFFG.

Belongs to the ThrE exporter (TC 2.A.79) family.

It localises to the cell membrane. The protein localises to the cell tip. This is an uncharacterized protein from Schizosaccharomyces pombe (strain 972 / ATCC 24843) (Fission yeast).